The following is an 87-amino-acid chain: MNSLLMITACFFLIGTVWAKEGYLVNKSTGCKYGCLLLGKNEGCDKECKAKNQGGSYGYCYAFGCWCEGLPESTPTYPLPNKSCSKK.

The N-terminal stretch at 1-19 (MNSLLMITACFFLIGTVWA) is a signal peptide. One can recognise an LCN-type CS-alpha/beta domain in the interval 20–85 (KEGYLVNKST…TYPLPNKSCS (66 aa)). 4 cysteine pairs are disulfide-bonded: cysteine 31/cysteine 84, cysteine 35/cysteine 60, cysteine 44/cysteine 65, and cysteine 48/cysteine 67.

It belongs to the long (4 C-C) scorpion toxin superfamily. Sodium channel inhibitor family. Beta subfamily. In terms of tissue distribution, expressed by the venom gland.

It is found in the secreted. Beta toxins bind voltage-independently at site-4 of sodium channels (Nav) and shift the voltage of activation toward more negative potentials thereby affecting sodium channel activation and promoting spontaneous and repetitive firing. This toxin is lethal to crustaceans (freshwater crayfish (Cambarellus montezumae spp.)), it provokes a reversible paralysis to insects (crickets (Achaeta spp.)), but is not toxic to mice. At high concentrations, it does displace the (beta) mammal-specific toxin Cn2 from rat brain synaptosomes. This chain is Toxin Css39.8, found in Centruroides suffusus (Durango bark scorpion).